Here is a 201-residue protein sequence, read N- to C-terminus: Adenylyl-sulfate kinase (201 aa).

35–42 (GLSGSGKS) serves as a coordination point for ATP. The active-site Phosphoserine intermediate is Ser109.

This sequence belongs to the APS kinase family.

The enzyme catalyses adenosine 5'-phosphosulfate + ATP = 3'-phosphoadenylyl sulfate + ADP + H(+). It participates in sulfur metabolism; hydrogen sulfide biosynthesis; sulfite from sulfate: step 2/3. Its function is as follows. Catalyzes the synthesis of activated sulfate. The polypeptide is Adenylyl-sulfate kinase (Citrobacter koseri (strain ATCC BAA-895 / CDC 4225-83 / SGSC4696)).